Here is a 279-residue protein sequence, read N- to C-terminus: Large ribosomal subunit protein uL2 (279 aa).

A disordered region spans residues Met-223–Lys-279. Gly residues predominate over residues Met-232–Gly-242. Over residues Leu-259–Lys-279 the composition is skewed to basic residues.

It belongs to the universal ribosomal protein uL2 family. In terms of assembly, part of the 50S ribosomal subunit. Forms a bridge to the 30S subunit in the 70S ribosome.

Its function is as follows. One of the primary rRNA binding proteins. Required for association of the 30S and 50S subunits to form the 70S ribosome, for tRNA binding and peptide bond formation. It has been suggested to have peptidyltransferase activity; this is somewhat controversial. Makes several contacts with the 16S rRNA in the 70S ribosome. This Prosthecochloris aestuarii (strain DSM 271 / SK 413) protein is Large ribosomal subunit protein uL2.